The primary structure comprises 207 residues: MERKERLRAGIAAMGLDISETAQDRLLAYVDLLKKWNKTYNLTALRDEEKMIVHHLLDSLTLLPHIEGVQTMLDVGSGGGQPGIPAAVCRPDVQITLLDANTKKTAFLQQAVIELGLDNVRVVSGRVEAVSDVRADVVTSRAFAELADFVSWTGHLLKDGGYWAAMKGVYPQGEIGRLPQDVCVEKVQRLDVPGLDAERHIVILSKR.

S-adenosyl-L-methionine contacts are provided by residues glycine 76, glutamine 81, 127 to 128, and arginine 141; that span reads VE.

This sequence belongs to the methyltransferase superfamily. RNA methyltransferase RsmG family.

The protein localises to the cytoplasm. It catalyses the reaction guanosine(527) in 16S rRNA + S-adenosyl-L-methionine = N(7)-methylguanosine(527) in 16S rRNA + S-adenosyl-L-homocysteine. Functionally, specifically methylates the N7 position of guanine in position 527 of 16S rRNA. This chain is Ribosomal RNA small subunit methyltransferase G, found in Neisseria meningitidis serogroup C / serotype 2a (strain ATCC 700532 / DSM 15464 / FAM18).